The following is a 119-amino-acid chain: Large ribosomal subunit protein uL24 (119 aa).

Belongs to the universal ribosomal protein uL24 family. Part of the 50S ribosomal subunit.

Its function is as follows. One of two assembly initiator proteins, it binds directly to the 5'-end of the 23S rRNA, where it nucleates assembly of the 50S subunit. In terms of biological role, located at the polypeptide exit tunnel on the outside of the subunit. The protein is Large ribosomal subunit protein uL24 of Methanococcus maripaludis (strain C5 / ATCC BAA-1333).